Here is a 203-residue protein sequence, read N- to C-terminus: Dephospho-CoA kinase (203 aa).

The DPCK domain occupies 4-203 (VIGITGGIAT…EEGYIQSESE (200 aa)). 12 to 17 (ATGKST) lines the ATP pocket.

It belongs to the CoaE family.

It is found in the cytoplasm. It carries out the reaction 3'-dephospho-CoA + ATP = ADP + CoA + H(+). It participates in cofactor biosynthesis; coenzyme A biosynthesis; CoA from (R)-pantothenate: step 5/5. In terms of biological role, catalyzes the phosphorylation of the 3'-hydroxyl group of dephosphocoenzyme A to form coenzyme A. In Staphylococcus epidermidis (strain ATCC 12228 / FDA PCI 1200), this protein is Dephospho-CoA kinase.